Reading from the N-terminus, the 769-residue chain is Polymeric immunoglobulin receptor (769 aa).

A signal peptide spans 1–18 (MRLSLFALLVTVFSGVST). Residues 19–643 (QSPIFGPQDV…SAGGQSGSSK (625 aa)) are Extracellular-facing. In terms of domain architecture, Ig-like V-type 1; required for binding to polymeric IgA and IgM spans 21–126 (PIFGPQDVSS…RGLFFDVSLE (106 aa)). Cys40 and Cys110 are oxidised to a cystine. 3 N-linked (GlcNAc...) asparagine glycosylation sites follow: Asn90, Asn135, and Asn206. 4 Ig-like V-type domains span residues 135–237 (NDTH…DLQV), 240–341 (PEPE…VQAW), 353–457 (NSRS…LQVA), and 463–563 (PDLE…IYVA). Intrachain disulfides connect Cys152–Cys220, Cys257–Cys324, and Cys370–Cys440. Asn471 is a glycosylation site (N-linked (GlcNAc...) asparagine). Cys484 and Cys546 are joined by a disulfide. 2 disordered regions span residues 569–604 (RGSP…NKAN) and 619–640 (AGDQ…GQSG). A compositionally biased stretch (basic and acidic residues) spans 595–604 (SVREDENKAN). The chain crosses the membrane as a helical span at residues 644-666 (VLFSTLVPLGLVLAVGAVAVWVA). Over 667–769 (RVRHRKNVDR…AQVHDGPQEA (103 aa)) the chain is Cytoplasmic. 4 positions are modified to phosphoserine: Ser678, Ser687, Ser694, and Ser740. Residues 719–741 (EIETTTECTTEPEESKKAKRSSK) are disordered. Positions 731-741 (EESKKAKRSSK) are enriched in basic and acidic residues.

In terms of assembly, interacts (mainly via CDR1-like domain) with dimeric IgA. Interacts (mainly via CDR2-like domain) with pentameric IgM. Either free or part of the secretory IgA (sIgA) complex that consists of two, four or five IgA monomers, and two additional non-Ig polypeptides, namely the JCHAIN and the secretory component (the proteolytic product of PIGR). Free secretory component interacts with bacterial antigens toxA of C.difficile and eae of E.coli. In terms of processing, N-glycosylated. N-glycosylation is required for anchoring IgA molecules to mucus, but is not necessary for Ig binding.

The protein resides in the cell membrane. The protein localises to the secreted. Functionally, mediates selective transcytosis of polymeric IgA and IgM across mucosal epithelial cells. Binds polymeric IgA and IgM at the basolateral surface of epithelial cells. The complex is then transported across the cell to be secreted at the apical surface. During this process, a cleavage occurs that separates the extracellular (known as the secretory component) from the transmembrane segment. Its function is as follows. Through its N-linked glycans ensures anchoring of secretory IgA (sIgA) molecules to mucus lining the epithelial surface to neutralize extracellular pathogens. On its own (free form) may act as a non-specific microbial scavenger to prevent pathogen interaction with epithelial cells. In Rattus norvegicus (Rat), this protein is Polymeric immunoglobulin receptor (Pigr).